Consider the following 192-residue polypeptide: uncharacterized protein (192 aa).

One can recognise a Nudix hydrolase domain in the interval 29-160 (RRQAAVLIPL…PLDIQRRGHD (132 aa)). The short motif at 67-89 (GAVDSTDASLIAAALREAHEEVA) is the Nudix box element. Mg(2+) is bound by residues Glu-83 and Glu-87.

It belongs to the Nudix hydrolase family. PCD1 subfamily. Mn(2+) serves as cofactor. The cofactor is Mg(2+).

Probably mediates the hydrolysis of some nucleoside diphosphate derivatives. This is an uncharacterized protein from Enterobacter sp. (strain 638).